Here is an 840-residue protein sequence, read N- to C-terminus: Heat shock 70 kDa protein 4 (840 aa).

Residue Lys53 is modified to N6-acetyllysine. Ser76 bears the Phosphoserine mark. Tyr89 and Tyr336 each carry phosphotyrosine. 2 positions are modified to phosphoserine: Ser393 and Ser415. The residue at position 430 (Lys430) is an N6-acetyllysine. Residues 500–575 (VHKSEENEEP…QAKKAKVKTS (76 aa)) are disordered. Basic and acidic residues predominate over residues 514 to 533 (QNAKEEEKMQVDQEEPHVEE). Position 538 is a phosphothreonine (Thr538). 2 positions are modified to phosphoserine: Ser546 and Ser647. Tyr660 carries the phosphotyrosine modification. Residue Lys679 is modified to N6-acetyllysine. Ser756 carries the post-translational modification Phosphoserine. An N6-methyllysine modification is found at Lys773. The disordered stretch occupies residues 783–840 (ISKPKPKVEPPKEEQKNAEQNGPVDGQGDNPGPQAAEQGTDAAVPSDSDKKLPEMDID). Composition is skewed to basic and acidic residues over residues 788 to 799 (PKVEPPKEEQKN) and 829 to 840 (DSDKKLPEMDID).

This sequence belongs to the heat shock protein 70 family. As to quaternary structure, interacts with TJP1/ZO-1.

The protein resides in the cytoplasm. The chain is Heat shock 70 kDa protein 4 (HSPA4) from Pongo abelii (Sumatran orangutan).